A 251-amino-acid chain; its full sequence is Triosephosphate isomerase (251 aa).

Asparagine 9–lysine 11 provides a ligand contact to substrate. Catalysis depends on histidine 96, which acts as the Electrophile. The Proton acceptor role is filled by glutamate 168. Substrate-binding positions include glycine 174, serine 214, and glycine 235 to glycine 236.

It belongs to the triosephosphate isomerase family. As to quaternary structure, homodimer.

The protein localises to the cytoplasm. The enzyme catalyses D-glyceraldehyde 3-phosphate = dihydroxyacetone phosphate. The protein operates within carbohydrate biosynthesis; gluconeogenesis. Its pathway is carbohydrate degradation; glycolysis; D-glyceraldehyde 3-phosphate from glycerone phosphate: step 1/1. In terms of biological role, involved in the gluconeogenesis. Catalyzes stereospecifically the conversion of dihydroxyacetone phosphate (DHAP) to D-glyceraldehyde-3-phosphate (G3P). This chain is Triosephosphate isomerase, found in Porphyromonas gingivalis (strain ATCC 33277 / DSM 20709 / CIP 103683 / JCM 12257 / NCTC 11834 / 2561).